Consider the following 888-residue polypeptide: DNA mismatch repair protein MutS (888 aa).

641 to 648 is an ATP binding site; the sequence is GPNMAGKS.

It belongs to the DNA mismatch repair MutS family.

Functionally, this protein is involved in the repair of mismatches in DNA. It is possible that it carries out the mismatch recognition step. This protein has a weak ATPase activity. This is DNA mismatch repair protein MutS from Rickettsia bellii (strain OSU 85-389).